The primary structure comprises 469 residues: Glutamine synthetase (469 aa).

A GS beta-grasp domain is found at 13 to 97 (HEVKFVDLRF…IRCDILEPGT (85 aa)). A GS catalytic domain is found at 105–469 (PRSIAKRAED…PVEFELYYSV (365 aa)). Mg(2+) is bound by residues Glu-130 and Glu-132. ATP is bound at residue Glu-208. Positions 213 and 221 each coordinate Mg(2+). Residues 265–266 (NG) and Gly-266 contribute to the L-glutamate site. His-270 is a binding site for Mg(2+). Residues 272-274 (HMS) and Ser-274 each bind ATP. Residues Arg-322, Glu-328, and Arg-340 each contribute to the L-glutamate site. Residues Arg-340, Arg-345, and Lys-353 each contribute to the ATP site. Glu-358 is a binding site for Mg(2+). Residue Arg-360 coordinates L-glutamate. An O-AMP-tyrosine modification is found at Tyr-398.

It belongs to the glutamine synthetase family. In terms of assembly, oligomer of 12 subunits arranged in the form of two hexagons. Mn(2+) is required as a cofactor.

Its subcellular location is the cytoplasm. The enzyme catalyses L-glutamate + NH4(+) + ATP = L-glutamine + ADP + phosphate + H(+). With respect to regulation, when cellular nitrogen levels are high, the C-terminal adenylyl transferase (AT) of GlnE inhibits GlnA by covalent transfer of an adenylyl group from ATP to Tyr-398. Conversely, when nitrogen levels are low, the N-terminal adenylyl removase (AR) of GlnE activates GlnA by removing the adenylyl group by phosphorolysis. The fully adenylated enzyme complex is inactive. In terms of biological role, catalyzes the ATP-dependent biosynthesis of glutamine from glutamate and ammonia. The protein is Glutamine synthetase of Salmonella typhi.